The following is a 185-amino-acid chain: Peptidyl-tRNA hydrolase (185 aa).

Residue Tyr-14 participates in tRNA binding. His-19 functions as the Proton acceptor in the catalytic mechanism. Tyr-64, Asn-66, and Asn-112 together coordinate tRNA.

It belongs to the PTH family. In terms of assembly, monomer.

Its subcellular location is the cytoplasm. The enzyme catalyses an N-acyl-L-alpha-aminoacyl-tRNA + H2O = an N-acyl-L-amino acid + a tRNA + H(+). Functionally, hydrolyzes ribosome-free peptidyl-tRNAs (with 1 or more amino acids incorporated), which drop off the ribosome during protein synthesis, or as a result of ribosome stalling. Catalyzes the release of premature peptidyl moieties from peptidyl-tRNA molecules trapped in stalled 50S ribosomal subunits, and thus maintains levels of free tRNAs and 50S ribosomes. The sequence is that of Peptidyl-tRNA hydrolase from Lactiplantibacillus plantarum (strain ATCC BAA-793 / NCIMB 8826 / WCFS1) (Lactobacillus plantarum).